Here is a 1382-residue protein sequence, read N- to C-terminus: Y' element ATP-dependent helicase protein 1 copy 4 (1382 aa).

One can recognise a Helicase ATP-binding domain in the interval 383–560; that stretch reads EIYMADTPSV…LQRIGLTGLA (178 aa). 396 to 403 serves as a coordination point for ATP; the sequence is APPGYGKT. The 150-residue stretch at 617–766 folds into the Helicase C-terminal domain; it reads KLLLALFEIE…EFYGLESKKG (150 aa). 2 disordered regions span residues 840–864 and 880–1007; these read ANASTNATTNSSTNATTTASTNVRT and TTES…DINK. The span at 880–983 shows a compositional bias: low complexity; it reads TTESTNSSTN…ATTTESTNAS (104 aa). Over residues 984-1007 the composition is skewed to basic and acidic residues; it reads AKEDANKDGNAEDNRFHPVTDINK.

This sequence belongs to the helicase family. Yeast subtelomeric Y' repeat subfamily.

Functionally, catalyzes DNA unwinding and is involved in telomerase-independent telomere maintenance. This is Y' element ATP-dependent helicase protein 1 copy 4 (YRF1-4) from Saccharomyces cerevisiae (strain ATCC 204508 / S288c) (Baker's yeast).